A 170-amino-acid chain; its full sequence is Ribosome maturation factor RimM (170 aa).

One can recognise a PRC barrel domain in the interval proline 98–phenylalanine 170.

It belongs to the RimM family. Binds ribosomal protein uS19.

It is found in the cytoplasm. Functionally, an accessory protein needed during the final step in the assembly of 30S ribosomal subunit, possibly for assembly of the head region. Essential for efficient processing of 16S rRNA. May be needed both before and after RbfA during the maturation of 16S rRNA. It has affinity for free ribosomal 30S subunits but not for 70S ribosomes. This is Ribosome maturation factor RimM from Xanthomonas campestris pv. campestris (strain 8004).